Reading from the N-terminus, the 418-residue chain is Serine hydroxymethyltransferase (418 aa).

(6S)-5,6,7,8-tetrahydrofolate is bound by residues leucine 121 and 125-127 (GHL). An N6-(pyridoxal phosphate)lysine modification is found at lysine 230. (6S)-5,6,7,8-tetrahydrofolate-binding positions include glutamate 246 and 355–357 (SPF).

This sequence belongs to the SHMT family. As to quaternary structure, homodimer. The cofactor is pyridoxal 5'-phosphate.

It is found in the cytoplasm. It catalyses the reaction (6R)-5,10-methylene-5,6,7,8-tetrahydrofolate + glycine + H2O = (6S)-5,6,7,8-tetrahydrofolate + L-serine. It participates in one-carbon metabolism; tetrahydrofolate interconversion. Its pathway is amino-acid biosynthesis; glycine biosynthesis; glycine from L-serine: step 1/1. Its function is as follows. Catalyzes the reversible interconversion of serine and glycine with tetrahydrofolate (THF) serving as the one-carbon carrier. This reaction serves as the major source of one-carbon groups required for the biosynthesis of purines, thymidylate, methionine, and other important biomolecules. Also exhibits THF-independent aldolase activity toward beta-hydroxyamino acids, producing glycine and aldehydes, via a retro-aldol mechanism. In Streptococcus pneumoniae (strain ATCC 700669 / Spain 23F-1), this protein is Serine hydroxymethyltransferase.